The primary structure comprises 745 residues: Capsid protein (745 aa).

Disordered regions lie at residues 44-64 (RRRFRRRRRRRGRPRYRGRRK), 580-602 (SQAIDDPSQKPTHALPEPGTLPR), 638-662 (EYSSDDENFSPGPSKRPALDTRPEG), and 678-699 (QDSQDSEESQEEAPLLEEQAHQ). A compositionally biased stretch (acidic residues) spans 681 to 692 (QDSEESQEEAPL).

The protein belongs to the anelloviridae capsid protein family.

The protein resides in the virion. Functionally, self assemble to form an icosahedral capsid. This Torque teno virus (isolate Human/China/CT23F/2001) (TTV) protein is Capsid protein.